The primary structure comprises 162 residues: Necrosis-inducing secreted protein 1 (162 aa).

The signal sequence occupies residues 1 to 19 (MQFLTSLAAAASLVSLASA). N-linked (GlcNAc...) asparagine glycosylation is found at asparagine 88, asparagine 126, asparagine 133, and asparagine 150. Residues 103–132 (EYVIAASLFSLYGASSSPTVSNYNVTVNVG) form a BAK1/SERK3-binding region.

This sequence belongs to the NIS1 effector family. Interacts with the host pattern recognition receptor (PRR)-associated kinases BAK1/SERK3, BKK1/SERK4 and BIK1.

Its subcellular location is the secreted. The protein resides in the host cytoplasm. Secreted effector that induces necrotic lesions in Nicotiana benthamiana. Interacts with the host receptor-like kinases (RLKs) BAK1/SERK3 and BKK1/SERK4, inhibits their kinase activity and suppresses INF1-induced pathogen-associated molecular pattern (PAMP)-triggered immunity (PTI) in N.benthamiana. Also interacts with the host receptor-like cytoplasmic kinase (RLCK) BIK1 and inhibits its kinase activity, thereby inhibiting PAMP-induced ROS generation. In PTI, phosphorylation relaying by RLKs and RLCKs is critical for the initiation of downstream signaling. The polypeptide is Necrosis-inducing secreted protein 1 (Colletotrichum orbiculare (strain 104-T / ATCC 96160 / CBS 514.97 / LARS 414 / MAFF 240422) (Cucumber anthracnose fungus)).